A 45-amino-acid chain; its full sequence is Large ribosomal subunit protein bL36 (45 aa).

The tract at residues 1-45 (MRVSSSIKADPSKGDKLVRRKGRLYVINKKDPNRKQRQAGPARKK) is disordered.

It belongs to the bacterial ribosomal protein bL36 family.

This Chlamydia trachomatis serovar L2 (strain ATCC VR-902B / DSM 19102 / 434/Bu) protein is Large ribosomal subunit protein bL36.